The primary structure comprises 707 residues: Polyribonucleotide nucleotidyltransferase (707 aa).

Mg(2+) is bound by residues Asp-485 and Asp-491. Positions Pro-552–Val-615 constitute a KH domain. Residues Gly-621–Lys-689 enclose the S1 motif domain.

This sequence belongs to the polyribonucleotide nucleotidyltransferase family. Mg(2+) serves as cofactor.

The protein localises to the cytoplasm. It catalyses the reaction RNA(n+1) + phosphate = RNA(n) + a ribonucleoside 5'-diphosphate. Involved in mRNA degradation. Catalyzes the phosphorolysis of single-stranded polyribonucleotides processively in the 3'- to 5'-direction. The polypeptide is Polyribonucleotide nucleotidyltransferase (Rhodospirillum centenum (strain ATCC 51521 / SW)).